Here is a 449-residue protein sequence, read N- to C-terminus: L-lysine-epsilon aminotransferase (449 aa).

Pyridoxal 5'-phosphate contacts are provided by G128 and A129. 2 residues coordinate 2-oxoglutarate: R170 and Q274. R170 is a binding site for L-lysine. Residue Q274 coordinates pyridoxal 5'-phosphate. An N6-(pyridoxal phosphate)lysine modification is found at K300. Residue R422 participates in 2-oxoglutarate binding.

This sequence belongs to the class-III pyridoxal-phosphate-dependent aminotransferase family. Pyridoxal 5'-phosphate is required as a cofactor.

It carries out the reaction L-lysine + 2-oxoglutarate = (S)-2-amino-6-oxohexanoate + L-glutamate. Functionally, catalyzes the transfer of the terminal amino group of L-lysine to alpha-ketoglutarate to yield L-glutamate and 2-aminoadipate 6-semialdehyde ((S)-2-amino-6-oxohexanoate), which is spontaneously converted to the dehydrated form 1-piperideine 6-carboxylate. The polypeptide is L-lysine-epsilon aminotransferase (Mycobacterium bovis (strain ATCC BAA-935 / AF2122/97)).